The chain runs to 260 residues: GTP cyclohydrolase FolE2 (260 aa).

It belongs to the GTP cyclohydrolase IV family.

The enzyme catalyses GTP + H2O = 7,8-dihydroneopterin 3'-triphosphate + formate + H(+). It functions in the pathway cofactor biosynthesis; 7,8-dihydroneopterin triphosphate biosynthesis; 7,8-dihydroneopterin triphosphate from GTP: step 1/1. Converts GTP to 7,8-dihydroneopterin triphosphate. This is GTP cyclohydrolase FolE2 from Desulfosudis oleivorans (strain DSM 6200 / JCM 39069 / Hxd3) (Desulfococcus oleovorans).